A 212-amino-acid polypeptide reads, in one-letter code: Uracil phosphoribosyltransferase (212 aa).

5-phospho-alpha-D-ribose 1-diphosphate-binding positions include R78, R103, and 130–138; that span reads DPMLATGGS. Residues I193 and 198–200 contribute to the uracil site; that span reads GDA. D199 serves as a coordination point for 5-phospho-alpha-D-ribose 1-diphosphate.

It belongs to the UPRTase family. Mg(2+) is required as a cofactor.

It catalyses the reaction UMP + diphosphate = 5-phospho-alpha-D-ribose 1-diphosphate + uracil. It functions in the pathway pyrimidine metabolism; UMP biosynthesis via salvage pathway; UMP from uracil: step 1/1. Its activity is regulated as follows. Allosterically activated by GTP. Its function is as follows. Catalyzes the conversion of uracil and 5-phospho-alpha-D-ribose 1-diphosphate (PRPP) to UMP and diphosphate. The protein is Uracil phosphoribosyltransferase of Pseudomonas aeruginosa (strain LESB58).